Here is a 1028-residue protein sequence, read N- to C-terminus: Collagen alpha-1(VI) chain (1028 aa).

The first 19 residues, 1 to 19 (MRAARALLPLLLQACWTAA), serve as a signal peptide directing secretion. An N-terminal globular domain region spans residues 20 to 256 (QDEPETPRAV…CCSFECQPAR (237 aa)). Positions 37-235 (DLFFVLDTSE…EAISQTIDTI (199 aa)) constitute a VWFA 1 domain. Asparagine 212 carries N-linked (GlcNAc...) asparagine glycosylation. The segment at 254–590 (PARGPPGLRG…GPPGHQGPPG (337 aa)) is disordered. Residues 257-592 (GPPGLRGDPG…PGHQGPPGPD (336 aa)) are triple-helical region. The short motif at 262 to 264 (RGD) is the Cell attachment site element. Composition is skewed to basic and acidic residues over residues 268 to 285 (EGER…EAGD) and 301 to 334 (KGEK…DGVK). Low complexity predominate over residues 384–394 (RPGSSGPSGDE). The Cell attachment site signature appears at 442–444 (RGD). Over residues 457 to 471 (EGPVGVPGDPGEAGP) the composition is skewed to low complexity. The short motif at 478–480 (RGD) is the Cell attachment site element. Low complexity predominate over residues 483–493 (PPGSEGARGAP). N-linked (GlcNAc...) asparagine glycosylation is found at asparagine 516 and asparagine 537. Over residues 550-560 (GEAGDPGDDNN) the composition is skewed to acidic residues. A compositionally biased stretch (pro residues) spans 579-590 (PQGPPGHQGPPG). The segment at 593–1028 (ECEILDIIMK…QTVSRKVALG (436 aa)) is C-terminal globular domain. 2 consecutive VWFA domains span residues 615–805 (DLLF…LKNV) and 829–1021 (DITI…HQTV). 2 N-linked (GlcNAc...) asparagine glycosylation sites follow: asparagine 804 and asparagine 896.

The protein belongs to the type VI collagen family. Trimers composed of three different chains: alpha-1(VI), alpha-2(VI), and alpha-3(VI) or alpha-5(VI) or alpha-6(VI). In terms of processing, prolines at the third position of the tripeptide repeating unit (G-X-Y) are hydroxylated in some or all of the chains.

The protein resides in the secreted. Its subcellular location is the extracellular space. It is found in the extracellular matrix. Its function is as follows. Collagen VI acts as a cell-binding protein. This is Collagen alpha-1(VI) chain (COL6A1) from Homo sapiens (Human).